The chain runs to 562 residues: Membrane protein insertase YidC (562 aa).

The helical transmembrane segment at 4 to 24 (QRIFLFLALSILGLLLWTSWE) threads the bilayer. Residues 33–71 (TEEVVEAEDDVPAPAETPDEAPDPADGETPARDRAEVED) form a disordered region. Acidic residues predominate over residues 35–58 (EVVEAEDDVPAPAETPDEAPDPAD). A compositionally biased stretch (basic and acidic residues) spans 61–71 (TPARDRAEVED). 4 helical membrane passes run 330 to 350 (MTLSVDYGFLTVLAKPLFWLL), 356 to 376 (IVGNWGVAIILVTLLIKLAFY), 426 to 446 (LGGCLPILVQIPVFIALYWVL), and 499 to 519 (IMMALPIVFTGFFMLFPAGLV).

Belongs to the OXA1/ALB3/YidC family. Type 1 subfamily. As to quaternary structure, interacts with the Sec translocase complex via SecD. Specifically interacts with transmembrane segments of nascent integral membrane proteins during membrane integration.

The protein localises to the cell inner membrane. Functionally, required for the insertion and/or proper folding and/or complex formation of integral membrane proteins into the membrane. Involved in integration of membrane proteins that insert both dependently and independently of the Sec translocase complex, as well as at least some lipoproteins. Aids folding of multispanning membrane proteins. In Alkalilimnicola ehrlichii (strain ATCC BAA-1101 / DSM 17681 / MLHE-1), this protein is Membrane protein insertase YidC.